The following is a 376-amino-acid chain: uncharacterized protein (376 aa).

The next 2 membrane-spanning stretches (helical) occupy residues 153–173 and 188–208; these read QGTL…VLFA and HRPF…LAVY.

It localises to the membrane. This is an uncharacterized protein from Saccharomyces cerevisiae (strain ATCC 204508 / S288c) (Baker's yeast).